The primary structure comprises 128 residues: Gastrotropin (128 aa).

An N-acetylalanine modification is found at A2.

It belongs to the calycin superfamily. Fatty-acid binding protein (FABP) family. Found exclusively in the ileum and to a lesser extent in distal jejunum.

It localises to the cytoplasm. Its subcellular location is the membrane. Binds to bile acids and is involved in enterohepatic bile acid metabolism. Required for efficient apical to basolateral transport of conjugated bile acids in ileal enterocytes. Stimulates gastric acid and pepsinogen secretion. The polypeptide is Gastrotropin (FABP6) (Sus scrofa (Pig)).